A 210-amino-acid chain; its full sequence is Na(+)-translocating NADH-quinone reductase subunit D (210 aa).

Transmembrane regions (helical) follow at residues 14–34 (PIVN…ALAV), 42–62 (LVMA…ISLI), 72–92 (IIVQ…LLQA), 103–123 (VFVG…AYAM), 131–151 (FMDG…VGFV), and 178–198 (NGML…IWII).

The protein belongs to the NqrDE/RnfAE family. Composed of six subunits; NqrA, NqrB, NqrC, NqrD, NqrE and NqrF.

The protein resides in the cell inner membrane. It carries out the reaction a ubiquinone + n Na(+)(in) + NADH + H(+) = a ubiquinol + n Na(+)(out) + NAD(+). In terms of biological role, NQR complex catalyzes the reduction of ubiquinone-1 to ubiquinol by two successive reactions, coupled with the transport of Na(+) ions from the cytoplasm to the periplasm. NqrA to NqrE are probably involved in the second step, the conversion of ubisemiquinone to ubiquinol. In Shewanella putrefaciens (strain CN-32 / ATCC BAA-453), this protein is Na(+)-translocating NADH-quinone reductase subunit D.